Reading from the N-terminus, the 65-residue chain is Small ribosomal subunit protein bS21 (65 aa).

Residues 45-65 are disordered; the sequence is GRLKRSRSRRRAQRANEERNS. Residues 48 to 57 are compositionally biased toward basic residues; that stretch reads KRSRSRRRAQ.

Belongs to the bacterial ribosomal protein bS21 family.

The chain is Small ribosomal subunit protein bS21 from Pelodictyon phaeoclathratiforme (strain DSM 5477 / BU-1).